Consider the following 101-residue polypeptide: Small ribosomal subunit protein uS14 (101 aa).

Residues 1 to 24 are disordered; sequence MAKVSSIKKNEKRKKLSQSLHNKR. Basic residues predominate over residues 10 to 24; sequence NEKRKKLSQSLHNKR.

This sequence belongs to the universal ribosomal protein uS14 family. Part of the 30S ribosomal subunit. Contacts proteins S3 and S10.

In terms of biological role, binds 16S rRNA, required for the assembly of 30S particles and may also be responsible for determining the conformation of the 16S rRNA at the A site. This is Small ribosomal subunit protein uS14 from Rickettsia bellii (strain OSU 85-389).